The primary structure comprises 358 residues: Membrane-bound lytic murein transglycosylase C (358 aa).

The signal sequence occupies residues 1 to 19 (MKITLKKLLILAIVPFLYA). The N-palmitoyl cysteine moiety is linked to residue C20. C20 carries S-diacylglycerol cysteine lipidation.

The protein belongs to the transglycosylase Slt family.

The protein localises to the cell outer membrane. It carries out the reaction Exolytic cleavage of the (1-&gt;4)-beta-glycosidic linkage between N-acetylmuramic acid (MurNAc) and N-acetylglucosamine (GlcNAc) residues in peptidoglycan, from either the reducing or the non-reducing ends of the peptidoglycan chains, with concomitant formation of a 1,6-anhydrobond in the MurNAc residue.. In terms of biological role, murein-degrading enzyme. May play a role in recycling of muropeptides during cell elongation and/or cell division. The sequence is that of Membrane-bound lytic murein transglycosylase C from Actinobacillus succinogenes (strain ATCC 55618 / DSM 22257 / CCUG 43843 / 130Z).